The following is an 87-amino-acid chain: Antitoxin YefM (87 aa).

The protein belongs to the phD/YefM antitoxin family. As to quaternary structure, forms a complex with YoeB which inhibits its toxin activity.

Antitoxin component of a type II toxin-antitoxin (TA) system. A probable antitoxin for the putative mRNA interferase YeoB. The chain is Antitoxin YefM from Streptomyces coelicolor (strain ATCC BAA-471 / A3(2) / M145).